Consider the following 504-residue polypeptide: 26S proteasome non-ATPase regulatory subunit 5 (504 aa).

An N-acetylalanine modification is found at Ala-2.

Belongs to the proteasome subunit S5B/HSM3 family. In terms of assembly, interacts with PSMC1, PSMC2, PSMD1 and PSMD6. Part of transient complex containing PSMD5, PSMC2, PSMC1 and PSMD2 formed during the assembly of the 26S proteasome.

Acts as a chaperone during the assembly of the 26S proteasome, specifically of the base subcomplex of the PA700/19S regulatory complex (RC). In the initial step of the base subcomplex assembly is part of an intermediate PSMD5:PSMC2:PSMC1:PSMD2 module which probably assembles with a PSMD10:PSMC4:PSMC5:PAAF1 module followed by dissociation of PSMD5. The polypeptide is 26S proteasome non-ATPase regulatory subunit 5 (Psmd5) (Mus musculus (Mouse)).